A 329-amino-acid chain; its full sequence is GTP 3',8-cyclase (329 aa).

Positions 8-234 constitute a Radical SAM core domain; it reads VFARKFYYLR…QLRQRSDGPA (227 aa). Arginine 17 provides a ligand contact to GTP. Cysteine 24 and cysteine 28 together coordinate [4Fe-4S] cluster. Tyrosine 30 is an S-adenosyl-L-methionine binding site. Cysteine 31 provides a ligand contact to [4Fe-4S] cluster. Arginine 68 lines the GTP pocket. Residue glycine 72 participates in S-adenosyl-L-methionine binding. Residue threonine 99 participates in GTP binding. Serine 123 contacts S-adenosyl-L-methionine. Residue lysine 160 coordinates GTP. Residue methionine 194 coordinates S-adenosyl-L-methionine. [4Fe-4S] cluster-binding residues include cysteine 257 and cysteine 260. 262–264 is a GTP binding site; the sequence is RLR. A [4Fe-4S] cluster-binding site is contributed by cysteine 274.

It belongs to the radical SAM superfamily. MoaA family. Monomer and homodimer. The cofactor is [4Fe-4S] cluster.

It carries out the reaction GTP + AH2 + S-adenosyl-L-methionine = (8S)-3',8-cyclo-7,8-dihydroguanosine 5'-triphosphate + 5'-deoxyadenosine + L-methionine + A + H(+). Its pathway is cofactor biosynthesis; molybdopterin biosynthesis. Its function is as follows. Catalyzes the cyclization of GTP to (8S)-3',8-cyclo-7,8-dihydroguanosine 5'-triphosphate. The polypeptide is GTP 3',8-cyclase (Shigella flexneri).